Reading from the N-terminus, the 64-residue chain is Mitotic-spindle organizing protein 1 (64 aa).

This sequence belongs to the MOZART1 family. Part of the gamma-tubulin complex. Interacts directly with alp6/GPC3.

The protein localises to the cytoplasm. The protein resides in the cytoskeleton. Its subcellular location is the microtubule organizing center. It is found in the spindle pole body. In terms of biological role, required for gamma-tubulin complex recruitment to the microtubule organizing center (MTOC). The polypeptide is Mitotic-spindle organizing protein 1 (mzt1) (Schizosaccharomyces pombe (strain 972 / ATCC 24843) (Fission yeast)).